Reading from the N-terminus, the 695-residue chain is A-kinase anchor protein 17A (695 aa).

A PKA-RI and PKA-RII subunit binding domain region spans residues 83 to 112 (VENKSLVKSFLACLDGKTIKLSGFSDILKV). A Glycyl lysine isopeptide (Lys-Gly) (interchain with G-Cter in SUMO1); alternate cross-link involves residue Lys118. Lys118 participates in a covalent cross-link: Glycyl lysine isopeptide (Lys-Gly) (interchain with G-Cter in SUMO2); alternate. The RRM domain occupies 147–256 (DTIHLEGLPC…KAVACNIKVS (110 aa)). A disordered region spans residues 279 to 337 (QELEQQREEQKRREKEAEERQRAEERKQKELEELERERKREEKLRKREQKQRDRELRRN). The interval 425–454 (LGLQRKERELRERLLSILLSKKPDDSHTHD) is PKA-RI-alpha subunit binding domain. The tract at residues 482–695 (TTLHPLGGQP…PSRHRSTWNR (214 aa)) is disordered. Position 537 is a phosphoserine (Ser537). Positions 567–585 (VSRKDTRSEQDKCNREPSK) are enriched in basic and acidic residues. 2 stretches are compositionally biased toward basic residues: residues 598-609 (RHKRERSRARRA) and 618-628 (RKERRPHKKHA). Residues 629-644 (YKDDSPRRRSTSPDHT) are compositionally biased toward basic and acidic residues. Ser633 bears the Phosphoserine mark. 2 stretches are compositionally biased toward basic residues: residues 645–658 (RSRR…HRRE) and 666–695 (SASR…TWNR).

In terms of assembly, monomer. Component of the spliceosome. Interacts with ZRANB2 and SFRS1/ASF through its Arg/Ser-rich domain. Interacts with RI and RII subunits of PKA. As to expression, widely expressed. Found in heart, brain, lung, liver, skeletal muscle, kidney and pancreas. Expressed in activated B-cells and placenta. Expressed in all cell lines tested including Jurkat-TAg, U-937 and HEK293 cells.

The protein resides in the nucleus speckle. Splice factor regulating alternative splice site selection for certain mRNA precursors. Mediates regulation of pre-mRNA splicing in a PKA-dependent manner. This Homo sapiens (Human) protein is A-kinase anchor protein 17A (AKAP17A).